The primary structure comprises 433 residues: GTPase Der (433 aa).

EngA-type G domains lie at 3–167 (NRVV…KEEK) and 175–347 (IKVA…KDYT). Residues 9-16 (GRPNVGKS), 56-60 (DTGGL), 119-122 (NKID), 181-188 (GRPNVGKS), 228-232 (DTAGV), and 293-296 (NKMD) contribute to the GTP site. Residues 348–432 (KQHKTSFVNR…PIKLVIKGRE (85 aa)) enclose the KH-like domain.

It belongs to the TRAFAC class TrmE-Era-EngA-EngB-Septin-like GTPase superfamily. EngA (Der) GTPase family. As to quaternary structure, associates with the 50S ribosomal subunit.

GTPase that plays an essential role in the late steps of ribosome biogenesis. The sequence is that of GTPase Der from Aquifex aeolicus (strain VF5).